A 117-amino-acid polypeptide reads, in one-letter code: Large ribosomal subunit protein bL19 (117 aa).

This sequence belongs to the bacterial ribosomal protein bL19 family.

In terms of biological role, this protein is located at the 30S-50S ribosomal subunit interface and may play a role in the structure and function of the aminoacyl-tRNA binding site. The polypeptide is Large ribosomal subunit protein bL19 (Shewanella halifaxensis (strain HAW-EB4)).